The following is a 480-amino-acid chain: Porphobilinogen deaminase, chloroplastic (480 aa).

The N-terminal 139 residues, 1–139, are a transit peptide targeting the chloroplast; that stretch reads MYCGRYETIG…VSGGRIWSLA (139 aa). Residue Cys-395 is modified to S-(dipyrrolylmethanemethyl)cysteine.

The protein belongs to the HMBS family. The cofactor is dipyrromethane.

It is found in the plastid. The protein localises to the chloroplast. The enzyme catalyses 4 porphobilinogen + H2O = hydroxymethylbilane + 4 NH4(+). The protein operates within porphyrin-containing compound metabolism; protoporphyrin-IX biosynthesis; coproporphyrinogen-III from 5-aminolevulinate: step 2/4. Its pathway is porphyrin-containing compound metabolism; chlorophyll biosynthesis. Functionally, tetrapolymerization of the monopyrrole PBG into the hydroxymethylbilane pre-uroporphyrinogen in several discrete steps. In Euglena gracilis, this protein is Porphobilinogen deaminase, chloroplastic.